The following is a 482-amino-acid chain: GTPase Obg (482 aa).

Positions 2-159 (PRFVDRVVIH…VDLTLELKTV (158 aa)) constitute an Obg domain. The OBG-type G domain occupies 160–340 (ADVGLVGFPS…LTFALWEMIV (181 aa)). GTP-binding positions include 166-173 (GFPSAGKS), 191-195 (FTTLV), 212-215 (DVPG), 292-295 (NKVD), and 321-323 (STL). The Mg(2+) site is built by S173 and T193. In terms of domain architecture, OCT spans 358 to 438 (PIPVDESGFT…IGDMTFDWEP (81 aa)). Residues 441–482 (PAGVDVTMSGRGTDARIDKTDRVGAAERRQARRVRRGQVEPE) form a disordered region. Residues 453–469 (TDARIDKTDRVGAAERR) are compositionally biased toward basic and acidic residues.

The protein belongs to the TRAFAC class OBG-HflX-like GTPase superfamily. OBG GTPase family. As to quaternary structure, monomer. Mg(2+) serves as cofactor.

The protein resides in the cytoplasm. Its function is as follows. An essential GTPase which binds GTP, GDP and possibly (p)ppGpp with moderate affinity, with high nucleotide exchange rates and a fairly low GTP hydrolysis rate. Plays a role in control of the cell cycle, stress response, ribosome biogenesis and in those bacteria that undergo differentiation, in morphogenesis control. This is GTPase Obg from Mycobacteroides abscessus (strain ATCC 19977 / DSM 44196 / CCUG 20993 / CIP 104536 / JCM 13569 / NCTC 13031 / TMC 1543 / L948) (Mycobacterium abscessus).